Consider the following 1380-residue polypeptide: Respiration factor 2 (1380 aa).

2 C2H2-type zinc fingers span residues 151–173 (FLCP…QHSH) and 179–202 (YLCI…QKLH). The disordered stretch occupies residues 208–231 (TGDPRRMTPAPNSTSSFASKRRHS). Residues Ser-231 and Ser-322 each carry the phosphoserine modification. Disordered regions lie at residues 413-445 (NLNL…NSNN), 544-584 (SPKN…NIDP), 624-643 (SRSS…SLNH), and 652-688 (LNLS…KRRR). Positions 424 to 445 (QQQQQQQQQQNSTSSTIVNSNN) are enriched in low complexity. Ser-544 is modified (phosphoserine). A compositionally biased stretch (polar residues) spans 544–569 (SPKNPPTTVSDSSSTINFNPGTNNLL). Residues 575–584 (PNDKDSNIDP) show a composition bias toward basic and acidic residues. Over residues 624-634 (SRSSIPNKSPP) the composition is skewed to low complexity. Ser-632 carries the phosphoserine modification. Over residues 652–681 (LNLSLNGSTDLPSTPQNQLKEPSYSDPISH) the composition is skewed to polar residues.

It belongs to the RSF2/TDA9 family.

Its subcellular location is the nucleus. Functionally, transcription factor that regulates expression of both nuclear and mitochondrial genes, and more specifically those required for glycerol-based growth and respiration. The protein is Respiration factor 2 (RSF2) of Saccharomyces cerevisiae (strain ATCC 204508 / S288c) (Baker's yeast).